The chain runs to 177 residues: Large ribosomal subunit protein uL6 (177 aa).

Belongs to the universal ribosomal protein uL6 family. Part of the 50S ribosomal subunit.

In terms of biological role, this protein binds to the 23S rRNA, and is important in its secondary structure. It is located near the subunit interface in the base of the L7/L12 stalk, and near the tRNA binding site of the peptidyltransferase center. The sequence is that of Large ribosomal subunit protein uL6 from Novosphingobium aromaticivorans (strain ATCC 700278 / DSM 12444 / CCUG 56034 / CIP 105152 / NBRC 16084 / F199).